A 20-amino-acid polypeptide reads, in one-letter code: Small ribosomal subunit protein bS20 (20 aa).

Residues 1 to 20 (ANNPGARKAIRKIEARTEVN) form a disordered region. Positions 11 to 20 (RKIEARTEVN) are enriched in basic and acidic residues.

This sequence belongs to the bacterial ribosomal protein bS20 family.

Binds directly to 16S ribosomal RNA. The sequence is that of Small ribosomal subunit protein bS20 (rpsT) from Brevundimonas vesicularis (Pseudomonas vesicularis).